The sequence spans 389 residues: MQQNIWFTPEGIEDLLPEEAKKLEFYRRQLLDGFELSGYDLVLPPIAEFTDSLLTGKGRHLAVDTCRFTDQESGKMMGVRADMTPQVARIATNRIKQTGIQRLCYVGEVLKTRNNKAKGSRSPIEIGAELFGHSGVESDIEVIELMVSSLHNIGLQDLTLSLGHVSVVDELMNVSGLTPTQKENLVDILLRKAVPEYTDFVAELTVTEAQKQAFELLLSLCGDIATVTEAMQGLAGLSEPMQRHLAHLQSVVDHFAGFDGLKIHMDLADLRGYQYHTGMIFSCYAAGRKMYQLARGGRYDGIGSEFGSAQLATGFSLDLRGALDLLTSPAEAEKEIVYAPNVYDADLQAEIAKLKQQKTIIKRFYEFDALEKGSRYLALQASQWILSVK.

The protein belongs to the class-II aminoacyl-tRNA synthetase family. HisZ subfamily. As to quaternary structure, heteromultimer composed of HisG and HisZ subunits.

The protein localises to the cytoplasm. The protein operates within amino-acid biosynthesis; L-histidine biosynthesis; L-histidine from 5-phospho-alpha-D-ribose 1-diphosphate: step 1/9. Required for the first step of histidine biosynthesis. May allow the feedback regulation of ATP phosphoribosyltransferase activity by histidine. This chain is ATP phosphoribosyltransferase regulatory subunit, found in Hydrogenovibrio crunogenus (strain DSM 25203 / XCL-2) (Thiomicrospira crunogena).